Here is a 362-residue protein sequence, read N- to C-terminus: Ferredoxin--NADP reductase, leaf isozyme 1, chloroplastic (362 aa).

The transit peptide at 1–36 (MAAVTAAAVSTSAAAAVTKASPSPAHCFLPCPPRTR) directs the protein to the chloroplast. An FAD-binding FR-type domain is found at 83-205 (KEPYVGKCLL…TGPVGKEMLM (123 aa)). Residues 141-144 (RLYS), 162-164 (CVK), tyrosine 168, 179-181 (VCS), and threonine 220 contribute to the FAD site. Serine 144 and lysine 164 together coordinate NADP(+). Cysteine 180 and cysteine 185 form a disulfide bridge. Residue serine 181 is modified to Phosphoserine. Residues threonine 220, 252–253 (VP), 282–283 (SR), lysine 292, 321–322 (GL), and glutamate 360 each bind NADP(+).

Belongs to the ferredoxin--NADP reductase type 1 family. Heterodimer with LFNR2. Component of high molecular weight thylakoid LFNRs-containing protein complexes containing LIR1, LFNR1, LFNR2, TIC62 and TROL proteins. Interacts directly with LFNR1 and LFNR2; LIR1 increases the affinity of LFNR1 and LFNR2 for TIC62 and subsequent thylakoid relocalization. FAD is required as a cofactor. May form interchain disulfide bonds with LIR1.

The protein localises to the plastid. Its subcellular location is the chloroplast stroma. It is found in the chloroplast thylakoid membrane. It catalyses the reaction 2 reduced [2Fe-2S]-[ferredoxin] + NADP(+) + H(+) = 2 oxidized [2Fe-2S]-[ferredoxin] + NADPH. Its pathway is energy metabolism; photosynthesis. Functionally, plays a key role in regulating the relative amounts of cyclic and non-cyclic electron flow to meet the demands of the plant for ATP and reducing power. This is Ferredoxin--NADP reductase, leaf isozyme 1, chloroplastic from Oryza sativa subsp. indica (Rice).